A 59-amino-acid polypeptide reads, in one-letter code: Putative antitoxin AF_1090 (59 aa).

The protein belongs to the UPF0165 family.

Its function is as follows. Possibly the antitoxin component of a type II toxin-antitoxin (TA) system. The chain is Putative antitoxin AF_1090 from Archaeoglobus fulgidus (strain ATCC 49558 / DSM 4304 / JCM 9628 / NBRC 100126 / VC-16).